Reading from the N-terminus, the 344-residue chain is Hyoscyamine 6-dioxygenase (344 aa).

One can recognise a Fe2OG dioxygenase domain in the interval 193–293 (QIQMMLTNYY…RVSIATLIGP (101 aa)). 3 residues coordinate Fe cation: His-217, Asp-219, and His-274. Arg-284 is a binding site for 2-oxoglutarate.

The protein belongs to the iron/ascorbate-dependent oxidoreductase family. Monomer. Requires Fe(2+) as cofactor. It depends on L-ascorbate as a cofactor. In terms of processing, the N-terminus is blocked. As to expression, root.

It carries out the reaction L-hyoscyamine + 2-oxoglutarate + O2 = (6S)-6-hydroxyhyoscyamine + succinate + CO2. It participates in alkaloid biosynthesis; scopolamine biosynthesis. This Hyoscyamus niger (Black henbane) protein is Hyoscyamine 6-dioxygenase (H6H).